The chain runs to 232 residues: Chalcone synthase (232 aa).

The active site involves cysteine 7.

The protein belongs to the thiolase-like superfamily. Chalcone/stilbene synthases family.

The catalysed reaction is (E)-4-coumaroyl-CoA + 3 malonyl-CoA + 3 H(+) = 2',4,4',6'-tetrahydroxychalcone + 3 CO2 + 4 CoA. Its pathway is secondary metabolite biosynthesis; flavonoid biosynthesis. Its function is as follows. The primary product of this enzyme is 4,2',4',6'-tetrahydroxychalcone (also termed naringenin-chalcone or chalcone) which can under specific conditions spontaneously isomerize into naringenin. This Malus domestica (Apple) protein is Chalcone synthase (CHS).